Consider the following 105-residue polypeptide: Prokineticin-1 (105 aa).

The first 19 residues, 1–19 (MRGAVQVFIMLLLATVSDC), serve as a signal peptide directing secretion. 5 disulfide bridges follow: cysteine 26/cysteine 38, cysteine 32/cysteine 50, cysteine 37/cysteine 78, cysteine 60/cysteine 86, and cysteine 80/cysteine 96.

This sequence belongs to the AVIT (prokineticin) family.

Its subcellular location is the secreted. Its function is as follows. Potently contracts gastrointestinal (GI) smooth muscle. Induces proliferation, migration and fenestration (the formation of membrane discontinuities) in capillary endothelial cells derived from endocrine glands. Has little or no effect on a variety of other endothelial and non-endothelial cell types. Induces proliferation and differentiation, but not migration, of enteric neural crest cells. Directly influences neuroblastoma progression by promoting the proliferation and migration of neuroblastoma cells. Positively regulates PTGS2 expression and prostaglandin synthesis. May play a role in placentation. May play a role in normal and pathological testis angiogenesis. The chain is Prokineticin-1 (Prok1) from Rattus norvegicus (Rat).